A 255-amino-acid polypeptide reads, in one-letter code: MRHPLVMGNWKLNGSRHMVHELVSNLRKELAGVAGCAVAIAPPEMYIDMAKREAEGSHIMLGAQNVDLNLSGAFTGETSAAMLKDIGAQYIIIGHSERRTYHKESDELIAKKFAVLKEQGLTPVLCIGETEAENEAGKTEEVCARQIDAVLKTQGAAAFEGAVIAYEPVWAIGTGKSATPAQAQAVHKFIRDHIAKVDANIAEQVIIQYGGSVNASNAAELFAQPDIDGALVGGASLKADAFAVIVKAAEAAKQA.

9–11 lines the substrate pocket; sequence NWK. The active-site Electrophile is histidine 95. Glutamate 167 functions as the Proton acceptor in the catalytic mechanism. Substrate is bound by residues glycine 173, serine 212, and 233 to 234; that span reads GG.

Belongs to the triosephosphate isomerase family. As to quaternary structure, homodimer.

Its subcellular location is the cytoplasm. It catalyses the reaction D-glyceraldehyde 3-phosphate = dihydroxyacetone phosphate. It participates in carbohydrate biosynthesis; gluconeogenesis. Its pathway is carbohydrate degradation; glycolysis; D-glyceraldehyde 3-phosphate from glycerone phosphate: step 1/1. Functionally, involved in the gluconeogenesis. Catalyzes stereospecifically the conversion of dihydroxyacetone phosphate (DHAP) to D-glyceraldehyde-3-phosphate (G3P). This chain is Triosephosphate isomerase, found in Escherichia fergusonii (strain ATCC 35469 / DSM 13698 / CCUG 18766 / IAM 14443 / JCM 21226 / LMG 7866 / NBRC 102419 / NCTC 12128 / CDC 0568-73).